The chain runs to 234 residues: Thrombin-like enzyme acutin (234 aa).

A propeptide is located at residue methionine 1. Residues 2–225 (VIGGDECDIN…YTDWIQRNIA (224 aa)) enclose the Peptidase S1 domain. Disulfide bonds link cysteine 8/cysteine 140, cysteine 27/cysteine 43, cysteine 75/cysteine 232, cysteine 119/cysteine 186, cysteine 151/cysteine 165, and cysteine 176/cysteine 201. N-linked (GlcNAc...) asparagine glycosylation is present at asparagine 21. Catalysis depends on charge relay system residues histidine 42 and aspartate 87. Serine 180 acts as the Charge relay system in catalysis.

This sequence belongs to the peptidase S1 family. Snake venom subfamily. As to quaternary structure, monomer. As to expression, expressed by the venom gland.

The protein resides in the secreted. Thrombin-like snake venom serine protease. Has arginyl esterase and fibrinogen clotting activities. This Deinagkistrodon acutus (Hundred-pace snake) protein is Thrombin-like enzyme acutin.